A 147-amino-acid polypeptide reads, in one-letter code: Cysteine proteinase inhibitor 2 (147 aa).

The signal sequence occupies residues 1-27 (MATMLKVSLVLSLLGFLVIAVVTPSAA). In terms of domain architecture, Cystatin spans 87 to 117 (LQFSRVVSAQKQVVAGLKYYLRIEVTQPNGS). The Secondary area of contact motif lies at 98–102 (QVVAG). An N-linked (GlcNAc...) asparagine glycan is attached at N115.

It belongs to the cystatin family. Phytocystatin subfamily.

Its subcellular location is the secreted. In terms of biological role, specific inhibitor of cysteine proteinases. Probably involved in the regulation of endogenous processes and in defense against pests and pathogens. The sequence is that of Cysteine proteinase inhibitor 2 (CYS2) from Arabidopsis thaliana (Mouse-ear cress).